We begin with the raw amino-acid sequence, 270 residues long: 4-hydroxy-tetrahydrodipicolinate reductase (270 aa).

NAD(+)-binding positions include glycine 9–methionine 14 and glutamate 35. Arginine 36 serves as a coordination point for NADP(+). NAD(+)-binding positions include glycine 99–threonine 101 and alanine 123–tyrosine 126. Residue histidine 156 is the Proton donor/acceptor of the active site. (S)-2,3,4,5-tetrahydrodipicolinate is bound at residue histidine 157. Lysine 160 acts as the Proton donor in catalysis. Glycine 166–threonine 167 is a (S)-2,3,4,5-tetrahydrodipicolinate binding site.

It belongs to the DapB family.

The protein localises to the cytoplasm. It carries out the reaction (S)-2,3,4,5-tetrahydrodipicolinate + NAD(+) + H2O = (2S,4S)-4-hydroxy-2,3,4,5-tetrahydrodipicolinate + NADH + H(+). It catalyses the reaction (S)-2,3,4,5-tetrahydrodipicolinate + NADP(+) + H2O = (2S,4S)-4-hydroxy-2,3,4,5-tetrahydrodipicolinate + NADPH + H(+). Its pathway is amino-acid biosynthesis; L-lysine biosynthesis via DAP pathway; (S)-tetrahydrodipicolinate from L-aspartate: step 4/4. Catalyzes the conversion of 4-hydroxy-tetrahydrodipicolinate (HTPA) to tetrahydrodipicolinate. This chain is 4-hydroxy-tetrahydrodipicolinate reductase, found in Mannheimia succiniciproducens (strain KCTC 0769BP / MBEL55E).